Here is a 173-residue protein sequence, read N- to C-terminus: RNA pyrophosphohydrolase (173 aa).

One can recognise a Nudix hydrolase domain in the interval 11–164 (PYRRCVGVVV…KKHVYRKVVS (154 aa)). Positions 52–73 (GGIDEGEEPLDAACRELYEETG) match the Nudix box motif.

It belongs to the Nudix hydrolase family. RppH subfamily. The cofactor is a divalent metal cation.

Its function is as follows. Accelerates the degradation of transcripts by removing pyrophosphate from the 5'-end of triphosphorylated RNA, leading to a more labile monophosphorylated state that can stimulate subsequent ribonuclease cleavage. The polypeptide is RNA pyrophosphohydrolase (Bartonella quintana (strain Toulouse) (Rochalimaea quintana)).